Consider the following 93-residue polypeptide: MENQDVNSNETVFDPPVGITNPPIDELLTKVSSKYALAIFAAKRARQINDYFQSIDEGVLEFVGPLVTPEMHEKPLSIALREINADLLEHTEG.

Belongs to the RNA polymerase subunit omega family. As to quaternary structure, the RNAP catalytic core consists of 2 alpha, 1 beta, 1 beta' and 1 omega subunit. When a sigma factor is associated with the core the holoenzyme is formed, which can initiate transcription.

It carries out the reaction RNA(n) + a ribonucleoside 5'-triphosphate = RNA(n+1) + diphosphate. Promotes RNA polymerase assembly. Latches the N- and C-terminal regions of the beta' subunit thereby facilitating its interaction with the beta and alpha subunits. The polypeptide is DNA-directed RNA polymerase subunit omega (Corynebacterium urealyticum (strain ATCC 43042 / DSM 7109)).